Here is a 196-residue protein sequence, read N- to C-terminus: dITP/XTP pyrophosphatase (196 aa).

9–14 (TSNAGK) serves as a coordination point for substrate. Mg(2+) contacts are provided by Glu39 and Asp68. Residue Asp68 is the Proton acceptor of the active site. Substrate-binding positions include Ser69, 147-150 (FGYD), Lys170, and 175-176 (HR).

The protein belongs to the HAM1 NTPase family. As to quaternary structure, homodimer. Mg(2+) serves as cofactor.

The enzyme catalyses XTP + H2O = XMP + diphosphate + H(+). The catalysed reaction is dITP + H2O = dIMP + diphosphate + H(+). It catalyses the reaction ITP + H2O = IMP + diphosphate + H(+). Functionally, pyrophosphatase that catalyzes the hydrolysis of nucleoside triphosphates to their monophosphate derivatives, with a high preference for the non-canonical purine nucleotides XTP (xanthosine triphosphate), dITP (deoxyinosine triphosphate) and ITP. Seems to function as a house-cleaning enzyme that removes non-canonical purine nucleotides from the nucleotide pool, thus preventing their incorporation into DNA/RNA and avoiding chromosomal lesions. In Nostoc sp. (strain PCC 7120 / SAG 25.82 / UTEX 2576), this protein is dITP/XTP pyrophosphatase.